Here is a 258-residue protein sequence, read N- to C-terminus: Ditrans,polycis-undecaprenyl-diphosphate synthase ((2E,6E)-farnesyl-diphosphate specific) (258 aa).

The active site involves aspartate 24. Aspartate 24 is a Mg(2+) binding site. Substrate-binding positions include 25-28 (GNGR), tryptophan 29, arginine 37, histidine 41, and 69-71 (SSE). Asparagine 72 acts as the Proton acceptor in catalysis. Substrate contacts are provided by residues tryptophan 73, arginine 75, arginine 192, and 198–200 (RIS). Residue glutamate 211 coordinates Mg(2+).

It belongs to the UPP synthase family. As to quaternary structure, homodimer. It depends on Mg(2+) as a cofactor.

The enzyme catalyses 8 isopentenyl diphosphate + (2E,6E)-farnesyl diphosphate = di-trans,octa-cis-undecaprenyl diphosphate + 8 diphosphate. In terms of biological role, catalyzes the sequential condensation of isopentenyl diphosphate (IPP) with (2E,6E)-farnesyl diphosphate (E,E-FPP) to yield (2Z,6Z,10Z,14Z,18Z,22Z,26Z,30Z,34E,38E)-undecaprenyl diphosphate (di-trans,octa-cis-UPP). UPP is the precursor of glycosyl carrier lipid in the biosynthesis of bacterial cell wall polysaccharide components such as peptidoglycan and lipopolysaccharide. The polypeptide is Ditrans,polycis-undecaprenyl-diphosphate synthase ((2E,6E)-farnesyl-diphosphate specific) (Xanthomonas oryzae pv. oryzae (strain KACC10331 / KXO85)).